The chain runs to 426 residues: PI-PLC X domain-containing protein At5g67130 (426 aa).

Positions 1–28 (MSACINGLCRAVTVSLLLLLLSFSFSSA) are cleaved as a signal peptide. In terms of domain architecture, PI-PLC X-box spans 76–232 (IINGLPFNKY…MVQENHRLLV (157 aa)). Asparagine 151 and asparagine 255 each carry an N-linked (GlcNAc...) asparagine glycan. A disordered region spans residues 258–277 (GDPGVKRGSCPNRKESQPLN). N-linked (GlcNAc...) asparagine glycosylation occurs at asparagine 370. Serine 404 carries GPI-anchor amidated serine lipidation. The propeptide at 405 to 426 (VAQLNNIVVFCFSLLPLLIFLL) is removed in mature form.

Its subcellular location is the cell membrane. The protein is PI-PLC X domain-containing protein At5g67130 of Arabidopsis thaliana (Mouse-ear cress).